The chain runs to 976 residues: MGVPAFFRWLTKKYPATVVNANEDRQRGVDGRRVPVDCTQPNPNFQEFDNLYLDMNGIIHPCTHPEDRPAPKNEDEMFALIFEYIDRIFSIVRPRRLLYMAIDGVAPRAKMNQQRSRRFRASKEMAEKAASIEEQRRRLIAEGIAVPQKKKDEEEAHFDSNCITPGTPFMARLADALRYYIHDRVTNDPAWANIEIILSDANVPGEGEHKIMDYIRKQRGNPAHDPNTVHCLCGADADLIMLGIATHEANFNIIREEFVPNQPRACELCGQYGHELKECRGAENDTDLGDEYCKPEQREKNFIFLRIPVLREYLEKEMAMPNLPFQFNLERALDDWVFLCFFVGNDFLPHLPSLEIREGAIDRLIKLYKEMVYEMKGYLTKDGIPELDRVEMIMRGLGKVEDEIFKRRQQDEERFKENQKNKKARMQQYGRGRGGRGRGRGQPAYVPSHGILAPMSAPMHHSGESTRQMASDARQAAMQFNATNDANAQAAANLKALLNVKGEQSPAEVAAQESRKRKAEQPIIITDEDEEPKDDIRLYESGWKERYYRAKFDVGSDDVDFRHRVAWAYVEGLCWVLRYYYQGCSSWDWYFPYHYAPFASDFETVGEFKPDFTRPTKPFNPLEQLMSVFPAASKQHLPVEWQKLMTEDESPIIDLYPADFRIDLNGKKYAWQGVALLPFVDEQRLLETLKSVYPTLTDEEKYRNTRGPNRIFIGRNHKSFAFFQQVAESKSNDLVDLDPSLLNGVSGKISYDSTATAPGLPFPSPVSHEECQDLPTNCGICVLYEDPEYPANYVFPAVRLDGAKEAEKTLRPEDWNERRDGRFNPTIGFNRNAPRGGLDLSGQRHINHHVRGAMYDRQGGNDNYRGGYRGGYQGGYDDRRGGRGGGGYRGGYNDSRPDFGRNYAGREGGGPQHYHEHQPGGGHGRPHDQQPYQDNRRGGGYHRGGRGNGPTGYQRPPYRGGRGRGGGGYQGNSSWR.

Residues arginine 264–glycine 281 form a CCHC-type zinc finger. Residues aspartate 411–lysine 420 are compositionally biased toward basic and acidic residues. Residues aspartate 411 to glutamine 442 form a disordered region. The segment at aspartate 535–glutamate 788 is interaction with paxt-1. The interval tryptophan 815–arginine 976 is disordered. Residues aspartate 856–glycine 866 show a composition bias toward low complexity.

Belongs to the 5'-3' exonuclease family. XRN2/RAT1 subfamily. In terms of assembly, interacts with paxt-1 (via N-terminus); the interaction is direct and results in stabilization of xrn-2 in the complex.

The protein resides in the nucleus. Possesses 5'-&gt;3' exoribonuclease activity. Plays a role in maintenance of steady-state concentration and turnover of microRNAs (miRNA) by degradation of mature miRNA. Degradation role is enhanced when in complex with paxt-1. Partially redundant to xrn-1 in miRNA guide strand degradation. Implicated in differential regulation of mRNAs such as let-7 by controlling the accumulation of mature miRNA. Positively regulates molting of the pharyngeal cuticle. This is 5'-3' exoribonuclease 2 homolog from Caenorhabditis briggsae.